The primary structure comprises 271 residues: Aquaporin-2 (271 aa).

At 1–11 (MWELRSIAFSR) the chain is on the cytoplasmic side. The chain crosses the membrane as a helical span at residues 12–32 (AVLAEFLATLLFVFFGLGSAL). At 33-40 (NWPQALPS) the chain is on the extracellular side. The helical transmembrane segment at 41–59 (VLQIAMAFGLAIGTLVQAL) threads the bilayer. Residues 60-64 (GHVSG) are Cytoplasmic-facing. The discontinuously helical intramembrane region spans 65-74 (AHINPAVTVA). An NPA 1 motif is present at residues 68-70 (NPA). The Cytoplasmic segment spans residues 75–85 (CLVGCHVSFLR). A helical membrane pass occupies residues 86–107 (AVFYVAAQLLGAVAGAALLHEI). Residues 108–127 (TPPAIRGDLAVNALNNNSTA) lie on the Extracellular side of the membrane. Asn-123 and Asn-124 each carry an N-linked (GlcNAc...) asparagine glycan. The helical transmembrane segment at 128–148 (GQAVTVELFLTLQLVLCIFPS) threads the bilayer. Residues 149–156 (TDKRRGKQ) are Cytoplasmic-facing. The chain crosses the membrane as a helical span at residues 157–176 (LGHPALSIGFSVALGHLLGI). Over 177–180 (HYTG) the chain is Extracellular. Positions 181 to 193 (CSMNPARSLAPAI) form an intramembrane region, discontinuously helical. The NPA 2 signature appears at 184–186 (NPA). The Extracellular segment spans residues 194–201 (VTGKFDDH). A helical transmembrane segment spans residues 202-222 (WVFWIGPLVGAIVASLLYNYV). The Cytoplasmic portion of the chain corresponds to 223-271 (LFPPAKSLSERLAVLKGLEPDTDWEEREVRRRQSVELHSPQSLPRGTKA). The segment at 249 to 271 (REVRRRQSVELHSPQSLPRGTKA) is disordered. Ser-256 is subject to Phosphoserine. The span at 261–271 (SPQSLPRGTKA) shows a compositional bias: polar residues.

Belongs to the MIP/aquaporin (TC 1.A.8) family. In terms of assembly, homotetramer. Ser-256 phosphorylation is necessary and sufficient for expression at the apical membrane. Endocytosis is not phosphorylation-dependent. Post-translationally, N-glycosylated. Expressed in renal collecting tubules.

The protein resides in the apical cell membrane. Its subcellular location is the basolateral cell membrane. It is found in the cell membrane. It localises to the cytoplasmic vesicle membrane. The protein localises to the golgi apparatus. The protein resides in the trans-Golgi network membrane. It catalyses the reaction H2O(in) = H2O(out). The catalysed reaction is glycerol(in) = glycerol(out). Its function is as follows. Forms a water-specific channel that provides the plasma membranes of renal collecting duct with high permeability to water, thereby permitting water to move in the direction of an osmotic gradient. Could also be permeable to glycerol. This is Aquaporin-2 from Ovis aries (Sheep).